We begin with the raw amino-acid sequence, 76 residues long: uncharacterized protein (76 aa).

This is an uncharacterized protein from Saccharomyces cerevisiae (strain ATCC 204508 / S288c) (Baker's yeast).